The following is a 3177-amino-acid chain: Proliferation marker protein Ki-67 (3177 aa).

One can recognise an FHA domain in the interval 27 to 76 (CLFGRSIECDIRIQLPVVSKRHCKIEVKEQEAILYNFSSTNPTQVNGVTI). Basic and acidic residues-rich tracts occupy residues 98 to 107 (EDGNHEDGSK) and 116 to 126 (LGKEPSRRASR). 2 disordered regions span residues 98–442 (EDGN…PGLS) and 473–572 (RPEL…ASIS). Phosphoserine is present on residues serine 125, serine 128, and serine 162. Polar residues-rich tracts occupy residues 165–177 (SDGS…QDSS) and 202–221 (STGS…LSNS). Positions 235 to 263 (MKEELDVKSQKSCRKSEPQPDRAAEESRE) are enriched in basic and acidic residues. Lysine 236 is covalently cross-linked (Glycyl lysine isopeptide (Lys-Gly) (interchain with G-Cter in SUMO2)). Phosphoserine occurs at positions 250, 276, 277, 286, and 287. Residues 276–286 (SSGSTPVTAAS) are compositionally biased toward polar residues. Phosphothreonine occurs at positions 307 and 316. A phosphoserine mark is found at serine 321, serine 337, serine 373, serine 498, serine 503, and serine 588. Residues 455 to 618 (KSEGMPMKRR…VKQTQTKVAK (164 aa)) are positively charged patch (CP). A PP1-binding domain is found at 462-509 (KRRRVSFGGHLRPELFDENLPPNTPLKRGETPTKRKSLGTHSPAVLKT). The disordered stretch occupies residues 614–652 (TKVAKHVPQKQTSKRQRRPSTPKKPTSNLHNQFTTGHAN). Basic residues predominate over residues 616-634 (VAKHVPQKQTSKRQRRPST). Residues 636 to 652 (KKPTSNLHNQFTTGHAN) show a composition bias toward polar residues. Residue threonine 701 is modified to Phosphothreonine. Disordered stretches follow at residues 793-815 (LEKK…SKLR), 835-901 (VLAE…LGSQ), and 956-989 (KHSP…DKPI). A compositionally biased stretch (polar residues) spans 855-864 (DQQVQDNENA). 2 stretches are compositionally biased toward basic and acidic residues: residues 867-882 (RCKE…EKTS) and 975-989 (LKEH…DKPI). K167R repeat units follow at residues 994–1101 (TRVL…FISP), 1108–1216 (KKIP…FQTP), 1228–1336 (SAKI…FQTP), 1348–1450 (SAKM…FQIP), 1461–1569 (KTKK…FQMP), 1582–1684 (TMLA…LFQT), 1696–1806 (KQTR…FQTP), 1817–1925 (ETTK…FQTP), 1937–2046 (SAKI…FQTP), 2059–2163 (VKMS…FQTP), 2175–2284 (SAKM…FQTP), 2296–2405 (SAKI…VFQT), 2419–2526 (AKLP…CQAP), 2537–2639 (KTPK…SFQE), 2643–2748 (KRIS…PIQT), and 2762–2870 (TQMP…ITQI). Glycyl lysine isopeptide (Lys-Gly) (interchain with G-Cter in SUMO2) cross-links involve residues lysine 1013 and lysine 1026. The residue at position 1062 (serine 1062) is a Phosphoserine. Residue lysine 1082 forms a Glycyl lysine isopeptide (Lys-Gly) (interchain with G-Cter in SUMO1); alternate linkage. A Glycyl lysine isopeptide (Lys-Gly) (interchain with G-Cter in SUMO2); alternate cross-link involves residue lysine 1082. Disordered stretches follow at residues 1109 to 1321 (KIPS…IRAQ) and 1334 to 1410 (QTPA…ENDC). Serine 1114 is subject to Phosphoserine. Positions 1114 to 1127 (SPHTQPVRTPASTK) are enriched in polar residues. Position 1122 is a phosphothreonine (threonine 1122). A Phosphoserine modification is found at serine 1125. Threonine 1150 bears the Phosphothreonine mark. Residue serine 1152 is modified to Phosphoserine. 2 positions are modified to phosphothreonine: threonine 1159 and threonine 1175. Serine 1189 is subject to Phosphoserine. Threonine 1215 carries the post-translational modification Phosphothreonine. The residue at position 1235 (serine 1235) is a Phosphoserine. Phosphothreonine is present on residues threonine 1243, threonine 1279, threonine 1295, threonine 1307, and threonine 1315. A compositionally biased stretch (basic residues) spans 1308–1317 (GHKRRPRTPK). Lysine 1317 is covalently cross-linked (Glycyl lysine isopeptide (Lys-Gly) (interchain with G-Cter in SUMO2)). Position 1335 is a phosphothreonine (threonine 1335). Over residues 1353–1368 (LESSQAEPVKTPASTK) the composition is skewed to polar residues. Position 1356 is a phosphoserine (serine 1356). Position 1363 is a phosphothreonine (threonine 1363). At serine 1366 the chain carries Phosphoserine. Basic and acidic residues predominate over residues 1371 to 1384 (SKTDLSKVDVREDP). Phosphothreonine occurs at positions 1400 and 1416. Serine 1469 carries the phosphoserine modification. A Phosphothreonine modification is found at threonine 1477. Serine 1480 bears the Phosphoserine mark. Threonine 1513 bears the Phosphothreonine mark. The tract at residues 1526–1550 (RKPAKRKLDSTAGMPNSKRMRCSSK) is disordered. A phosphoserine mark is found at serine 1542 and serine 1587. Lysine 1609 carries the N6-acetyllysine modification. Residue lysine 1668 forms a Glycyl lysine isopeptide (Lys-Gly) (interchain with G-Cter in SUMO2) linkage. A phosphothreonine mark is found at threonine 1684 and threonine 1712. Serine 1734 bears the Phosphoserine mark. The interval 1749-1797 (IPIGPEDDTENKGVKESTPQTLDSSASRTVSKRQQGAHEERPQFSGDLF) is disordered. Residues 1765 to 1782 (STPQTLDSSASRTVSKRQ) are compositionally biased toward polar residues. Residue threonine 1766 is modified to Phosphothreonine. Serine 1779 is subject to Phosphoserine. At threonine 1805 the chain carries Phosphothreonine. Residue serine 1825 is modified to Phosphoserine. A phosphothreonine mark is found at threonine 1859, threonine 1868, threonine 1884, and threonine 1924. A disordered region spans residues 1925–2033 (PAGASDPVSV…QTPKIRAQPL (109 aa)). Serine 1944 is modified (phosphoserine). Lysine 1966 carries the post-translational modification N6-acetyllysine. A phosphothreonine mark is found at threonine 1989, threonine 2005, and threonine 2025. A Glycyl lysine isopeptide (Lys-Gly) (interchain with G-Cter in SUMO1); alternate cross-link involves residue lysine 2027. Residue lysine 2027 forms a Glycyl lysine isopeptide (Lys-Gly) (interchain with G-Cter in SUMO2); alternate linkage. Residue threonine 2045 is modified to Phosphothreonine. Positions 2047 to 2112 (AGANDSVTVE…SPGTPAPVQE (66 aa)) are disordered. A compositionally biased stretch (polar residues) spans 2063–2078 (LESSQAEPVKTPASTK). Position 2065 is a phosphoserine (serine 2065). Residue threonine 2073 is modified to Phosphothreonine. 3 positions are modified to phosphoserine: serine 2076, serine 2095, and serine 2103. Positions 2088–2101 (VDVREDPSILEKKT) are enriched in basic and acidic residues. Phosphothreonine occurs at positions 2106 and 2122. Residues 2124 to 2343 (KQKLDFTGNS…PLSKSSCASQ (220 aa)) form a disordered region. A compositionally biased stretch (basic residues) spans 2135-2144 (GHKRRPRTPK). Threonine 2162 is modified (phosphothreonine). Positions 2180-2195 (LESSQAKPVKTPASTK) are enriched in polar residues. Serine 2182 is modified (phosphoserine). The residue at position 2190 (threonine 2190) is a Phosphothreonine. Residue serine 2198 is modified to Phosphoserine. Residue threonine 2218 is modified to Phosphothreonine. The residue at position 2220 (serine 2220) is a Phosphoserine. A phosphothreonine mark is found at threonine 2227, threonine 2243, and threonine 2283. Position 2303 is a phosphoserine (serine 2303). A phosphothreonine mark is found at threonine 2311 and threonine 2348. Residues 2378-2390 (RGKRQQRSCKKRS) show a composition bias toward basic residues. The tract at residues 2378-2447 (RGKRQQRSCK…RRQARTGLRK (70 aa)) is disordered. Residues serine 2390 and serine 2392 each carry the phosphoserine modification. Threonine 2405 bears the Phosphothreonine mark. Residues serine 2423 and serine 2425 each carry the phosphoserine modification. A Glycyl lysine isopeptide (Lys-Gly) (interchain with G-Cter in SUMO1) cross-link involves residue lysine 2451. Phosphoserine occurs at positions 2464, 2487, 2545, and 2592. Residues 2538-2547 (TPKMPDKSPE) are compositionally biased toward basic and acidic residues. Disordered regions lie at residues 2538–2828 (TPKM…QVSK) and 2879–3160 (HDTS…DAKT). Residues 2605–2622 (VQKQDPSVSLTGRRNQPR) are compositionally biased toward polar residues. The residue at position 2649 (serine 2649) is a Phosphoserine. 2 stretches are compositionally biased toward basic and acidic residues: residues 2673–2697 (GVKE…KEPV) and 2704–2714 (EEVKKSTKQKI). A Glycyl lysine isopeptide (Lys-Gly) (interchain with G-Cter in SUMO1); alternate cross-link involves residue lysine 2675. Lysine 2675 is covalently cross-linked (Glycyl lysine isopeptide (Lys-Gly) (interchain with G-Cter in SUMO2); alternate). Polar residues-rich tracts occupy residues 2764-2781 (MPCN…QSSP) and 2883-2892 (ILKSTQQQKP). Phosphoserine is present on residues serine 2768 and serine 2780. Over residues 2907–2923 (ASKEDPKEVLVDTRDHA) the composition is skewed to basic and acidic residues. A Glycyl lysine isopeptide (Lys-Gly) (interchain with G-Cter in SUMO2) cross-link involves residue lysine 2909. Lysine 2928 carries the N6-acetyllysine modification. A compositionally biased stretch (basic and acidic residues) spans 2959 to 2971 (EATDEKPVPEKKR). Residue 2973–2980 (ASSKRHVS) participates in ATP binding. The residue at position 2980 (serine 2980) is a Phosphoserine. Positions 3008–3018 (KTEEMEAKREN) are enriched in basic and acidic residues. Threonine 3021 is modified (phosphothreonine). Over residues 3039–3057 (PKFDASAENVGIKKNEKTM) the composition is skewed to basic and acidic residues. The span at 3058–3067 (KTASQETELQ) shows a compositional bias: polar residues. Position 3061 is a phosphoserine (serine 3061). 2 stretches are compositionally biased toward basic and acidic residues: residues 3118-3132 (PQEE…DVRC) and 3140-3160 (VALD…DAKT).

Interacts with KIF15. Interacts (via the FHA domain) with NIFK. Interacts with PPP1CC. Component of a complex at least composed of ZNF335, HCFC1, CCAR2, EMSY, MKI67, RBBP5, ASH2L and WDR5; the complex is formed as a result of interactions between components of a nuclear receptor-mediated transcription complex and a histone methylation complex. Interacts with ZNF335. Post-translationally, hyperphosphorylated by CDK1 in mitosis; hyperphosphorylatiom prevents undergoing liquid-liquid phase separation. Dephosphorylated by PPP1CC at the onset of anaphase. Dephosphorylation by protein phosphatase 2A (PP2A) and simultaneous exposure of the positively charged patch (CP) during mitotic exit induce the RNA-dependent formation of a liquid-like condensed phase on the chromosome surface. Ubiquitinated by the APC/C complex after neuronal progenitors exit mitosis during brain development, leading to clearance from constitutive heterochromatin. Mainly present in proliferating cells (at protein level).

The protein resides in the chromosome. It localises to the nucleus. It is found in the nucleolus. In terms of biological role, protein that associates with the surface of mitotic chromosomes and acts both as a chromosome repellent during early mitosis and chromosome attractant during late mitosis. Required to maintain individual mitotic chromosomes dispersed in the cytoplasm following nuclear envelope disassembly. During early mitosis, relocalizes from nucleoli to the chromosome surface where it forms extended brush structures that cover a substantial fraction of the chromosome surface. The MKI67 brush structure prevents chromosomes from collapsing into a single chromatin mass by forming a steric and electrostatic charge barrier: the protein has a high net electrical charge and acts as a surfactant, dispersing chromosomes and enabling independent chromosome motility. During mitotic anaphase, the MKI67 brush structure collapses and MKI67 switches from a chromosome repellent to a chromosome attractant to promote chromosome clustering and facilitate the exclusion of large cytoplasmic particles from the future nuclear space. Mechanistically, dephosphorylation during mitotic exit and simultaneous exposure of a conserved basic patch induce the RNA-dependent formation of a liquid-like condensed phase on the chromosome surface, promoting coalescence of neighboring chromosome surfaces and clustering of chromosomes. Binds premature ribosomal RNAs during anaphase; promoting liquid-liquid phase separation. Binds DNA, with a preference for supercoiled DNA and AT-rich DNA. Does not contribute to the internal structure of mitotic chromosomes. May play a role in chromatin organization; it is however unclear whether it plays a direct role in chromatin organization or whether it is an indirect consequence of its function in mitotic chromosome. The sequence is that of Proliferation marker protein Ki-67 from Mus musculus (Mouse).